Here is a 446-residue protein sequence, read N- to C-terminus: Kynurenine 3-monooxygenase (446 aa).

The protein belongs to the aromatic-ring hydroxylase family. KMO subfamily. The cofactor is FAD.

It carries out the reaction L-kynurenine + NADPH + O2 + H(+) = 3-hydroxy-L-kynurenine + NADP(+) + H2O. Its pathway is cofactor biosynthesis; NAD(+) biosynthesis; quinolinate from L-kynurenine: step 1/3. Its function is as follows. Catalyzes the hydroxylation of L-kynurenine (L-Kyn) to form 3-hydroxy-L-kynurenine (L-3OHKyn). Required for synthesis of quinolinic acid. This chain is Kynurenine 3-monooxygenase, found in Flavobacterium johnsoniae (strain ATCC 17061 / DSM 2064 / JCM 8514 / BCRC 14874 / CCUG 350202 / NBRC 14942 / NCIMB 11054 / UW101) (Cytophaga johnsonae).